We begin with the raw amino-acid sequence, 127 residues long: Histidine-containing phosphotransfer protein 4 (127 aa).

The region spanning 27 to 122 (NPNFVEEVSA…STLRKKLEHY (96 aa)) is the HPt domain. Histidine 68 bears the Phosphohistidine mark.

In terms of assembly, interacts with the B-type response regulators ARR1 and ARR2. In terms of processing, two-component system major event consists of a His-to-Asp phosphorelay between a sensor histidine kinase (HK) and a response regulator (RR). In plants, the His-to-Asp phosphorelay involves an additional intermediate named Histidine-containing phosphotransfer protein (HPt). This multistep phosphorelay consists of a His-Asp-His-Asp sequential transfer of a phosphate group between first a His and an Asp of the HK protein, followed by the transfer to a conserved His of the HPt protein and finally the transfer to an Asp in the receiver domain of the RR protein. In terms of tissue distribution, predominantly expressed in aerial parts of the plant.

Its subcellular location is the cytoplasm. The protein localises to the cytosol. It localises to the nucleus. Functionally, functions as a two-component phosphorelay mediator between cytokinin sensor histidine kinases and response regulators (B-type ARRs). Plays an important role in propagating cytokinin signal transduction through the multistep His-to-Asp phosphorelay. In Arabidopsis thaliana (Mouse-ear cress), this protein is Histidine-containing phosphotransfer protein 4 (AHP4).